We begin with the raw amino-acid sequence, 24 residues long: Conotoxin PIVF (24 aa).

Disulfide bonds link C2-C10, C3-C15, and C13-C19. Position 24 is a lysine amide (K24).

This sequence belongs to the conotoxin A superfamily. As to expression, expressed by the venom duct.

Its subcellular location is the secreted. In terms of biological role, probable neurotoxin with ion channel inhibitor activity. In vivo, elicits dose-dependently excitatory activity upon injection into fish. Its action is slowly reversible. The protein is Conotoxin PIVF of Conus purpurascens (Purple cone).